Reading from the N-terminus, the 276-residue chain is Putative pyruvate, phosphate dikinase regulatory protein (276 aa).

153-160 provides a ligand contact to ADP; that stretch reads GISRTSKT.

Belongs to the pyruvate, phosphate/water dikinase regulatory protein family. PDRP subfamily.

It carries out the reaction N(tele)-phospho-L-histidyl/L-threonyl-[pyruvate, phosphate dikinase] + ADP = N(tele)-phospho-L-histidyl/O-phospho-L-threonyl-[pyruvate, phosphate dikinase] + AMP + H(+). The catalysed reaction is N(tele)-phospho-L-histidyl/O-phospho-L-threonyl-[pyruvate, phosphate dikinase] + phosphate + H(+) = N(tele)-phospho-L-histidyl/L-threonyl-[pyruvate, phosphate dikinase] + diphosphate. Its function is as follows. Bifunctional serine/threonine kinase and phosphorylase involved in the regulation of the pyruvate, phosphate dikinase (PPDK) by catalyzing its phosphorylation/dephosphorylation. The chain is Putative pyruvate, phosphate dikinase regulatory protein from Brucella anthropi (strain ATCC 49188 / DSM 6882 / CCUG 24695 / JCM 21032 / LMG 3331 / NBRC 15819 / NCTC 12168 / Alc 37) (Ochrobactrum anthropi).